The sequence spans 90 residues: Antitoxin epsilon (90 aa).

Belongs to the epsilon antitoxin family. In terms of assembly, in the presence of the zeta toxin, forms an inactive PezA(2)PezT(2) heterotetramer.

Antitoxin component of a type II toxin-antitoxin (TA) system. Neutralizes the toxic effect of cognate zeta toxin. Part of a postsegregational killing (PSK) system involved in the killing of plasmid-free cells. Continuous synthesis of the epsilon antitoxin is required to counteract the zeta toxin. The polypeptide is Antitoxin epsilon (Streptococcus agalactiae).